Reading from the N-terminus, the 379-residue chain is Arginine biosynthesis bifunctional protein ArgJ (379 aa).

Residues T141, K163, T174, E252, N374, and T379 each coordinate substrate. T174 serves as the catalytic Nucleophile.

The protein belongs to the ArgJ family. Heterotetramer of two alpha and two beta chains.

The protein resides in the cytoplasm. The catalysed reaction is N(2)-acetyl-L-ornithine + L-glutamate = N-acetyl-L-glutamate + L-ornithine. It catalyses the reaction L-glutamate + acetyl-CoA = N-acetyl-L-glutamate + CoA + H(+). The protein operates within amino-acid biosynthesis; L-arginine biosynthesis; L-ornithine and N-acetyl-L-glutamate from L-glutamate and N(2)-acetyl-L-ornithine (cyclic): step 1/1. Its pathway is amino-acid biosynthesis; L-arginine biosynthesis; N(2)-acetyl-L-ornithine from L-glutamate: step 1/4. Catalyzes two activities which are involved in the cyclic version of arginine biosynthesis: the synthesis of N-acetylglutamate from glutamate and acetyl-CoA as the acetyl donor, and of ornithine by transacetylation between N(2)-acetylornithine and glutamate. In Aquifex aeolicus (strain VF5), this protein is Arginine biosynthesis bifunctional protein ArgJ.